We begin with the raw amino-acid sequence, 234 residues long: Lipoprotein-releasing system ATP-binding protein LolD 1 (234 aa).

In terms of domain architecture, ABC transporter spans 5 to 231; that stretch reads IEARGIEKVF…RLTSNVRDPG (227 aa). 41-48 provides a ligand contact to ATP; that stretch reads GASGSGKS.

It belongs to the ABC transporter superfamily. Lipoprotein translocase (TC 3.A.1.125) family. The complex is composed of two ATP-binding proteins (LolD) and two transmembrane proteins (LolC and LolE).

The protein resides in the cell inner membrane. Part of the ABC transporter complex LolCDE involved in the translocation of mature outer membrane-directed lipoproteins, from the inner membrane to the periplasmic chaperone, LolA. Responsible for the formation of the LolA-lipoprotein complex in an ATP-dependent manner. The chain is Lipoprotein-releasing system ATP-binding protein LolD 1 from Caulobacter vibrioides (strain ATCC 19089 / CIP 103742 / CB 15) (Caulobacter crescentus).